A 173-amino-acid polypeptide reads, in one-letter code: Large ribosomal subunit protein bL9 (173 aa).

The tract at residues 150–173 (KQEDKKSLSKKLNKADEQGERAEV) is disordered.

The protein belongs to the bacterial ribosomal protein bL9 family.

Functionally, binds to the 23S rRNA. This chain is Large ribosomal subunit protein bL9, found in Borreliella burgdorferi (strain ZS7) (Borrelia burgdorferi).